The chain runs to 877 residues: Leucine--tRNA ligase (877 aa).

Residues 43 to 53 (PYPSGRIHMGH) carry the 'HIGH' region motif. The 'KMSKS' region motif lies at 628 to 632 (KMSKS). Lysine 631 is a binding site for ATP.

The protein belongs to the class-I aminoacyl-tRNA synthetase family.

It is found in the cytoplasm. The catalysed reaction is tRNA(Leu) + L-leucine + ATP = L-leucyl-tRNA(Leu) + AMP + diphosphate. The sequence is that of Leucine--tRNA ligase from Brucella anthropi (strain ATCC 49188 / DSM 6882 / CCUG 24695 / JCM 21032 / LMG 3331 / NBRC 15819 / NCTC 12168 / Alc 37) (Ochrobactrum anthropi).